A 251-amino-acid chain; its full sequence is Small ribosomal subunit protein uS2 (251 aa).

The residue at position 2 (Ser-2) is an N-acetylserine. The disordered stretch occupies residues 209 to 251; it reads EIEQQTAEEAAQEAGEEEAKEEVTEEQTEAAEWAQENADNVEW. Residues 218-237 are compositionally biased toward acidic residues; that stretch reads AAQEAGEEEAKEEVTEEQTE. The segment covering 238–251 has biased composition (low complexity); it reads AAEWAQENADNVEW.

It belongs to the universal ribosomal protein uS2 family. As to quaternary structure, component of the small ribosomal subunit. Mature ribosomes consist of a small (40S) and a large (60S) subunit. The 40S subunit contains about 33 different proteins and 1 molecule of RNA (18S). The 60S subunit contains about 49 different proteins and 3 molecules of RNA (25S, 5.8S and 5S). Interacts with RPS21.

The protein localises to the cytoplasm. Required for the assembly and/or stability of the 40S ribosomal subunit. Required for the processing of the 20S rRNA-precursor to mature 18S rRNA in a late step of the maturation of 40S ribosomal subunits. The sequence is that of Small ribosomal subunit protein uS2 from Candida glabrata (strain ATCC 2001 / BCRC 20586 / JCM 3761 / NBRC 0622 / NRRL Y-65 / CBS 138) (Yeast).